A 276-amino-acid polypeptide reads, in one-letter code: Large ribosomal subunit protein uL2 (276 aa).

Disordered stretches follow at residues 36–58 and 214–276; these read PLHK…GGGH and LGKR…RRKK.

The protein belongs to the universal ribosomal protein uL2 family. As to quaternary structure, part of the 50S ribosomal subunit. Forms a bridge to the 30S subunit in the 70S ribosome.

Functionally, one of the primary rRNA binding proteins. Required for association of the 30S and 50S subunits to form the 70S ribosome, for tRNA binding and peptide bond formation. It has been suggested to have peptidyltransferase activity; this is somewhat controversial. Makes several contacts with the 16S rRNA in the 70S ribosome. This chain is Large ribosomal subunit protein uL2, found in Halalkalibacterium halodurans (strain ATCC BAA-125 / DSM 18197 / FERM 7344 / JCM 9153 / C-125) (Bacillus halodurans).